Reading from the N-terminus, the 432-residue chain is Glutamate-1-semialdehyde 2,1-aminomutase (432 aa).

Lysine 272 is subject to N6-(pyridoxal phosphate)lysine.

This sequence belongs to the class-III pyridoxal-phosphate-dependent aminotransferase family. HemL subfamily. As to quaternary structure, homodimer. Requires pyridoxal 5'-phosphate as cofactor.

Its subcellular location is the cytoplasm. It catalyses the reaction (S)-4-amino-5-oxopentanoate = 5-aminolevulinate. It functions in the pathway porphyrin-containing compound metabolism; protoporphyrin-IX biosynthesis; 5-aminolevulinate from L-glutamyl-tRNA(Glu): step 2/2. The protein operates within porphyrin-containing compound metabolism; chlorophyll biosynthesis. The polypeptide is Glutamate-1-semialdehyde 2,1-aminomutase (Trichodesmium erythraeum (strain IMS101)).